The primary structure comprises 126 residues: Protein ApaG (126 aa).

The region spanning 2-126 is the ApaG domain; the sequence is ADKLYQMEVQ…MTLVAPRVLH (125 aa).

In Chromobacterium violaceum (strain ATCC 12472 / DSM 30191 / JCM 1249 / CCUG 213 / NBRC 12614 / NCIMB 9131 / NCTC 9757 / MK), this protein is Protein ApaG.